Reading from the N-terminus, the 1798-residue chain is Non-reducing polyketide synthase nscA (1798 aa).

The segment at 25 to 256 (RRLDQHSKDR…PLPVYDGLCH (232 aa)) is N-terminal acylcarrier protein transacylase domain (SAT). Residues 392 to 825 (SSKLAIVGMA…GGNTTLLLED (434 aa)) form the Ketosynthase family 3 (KS3) domain. Catalysis depends on for beta-ketoacyl synthase activity residues C565, H700, and H743. The segment at 931-1224 (FTGQGAYYHG…LVRSMIPSAP (294 aa)) is malonyl-CoA:ACP transacylase (MAT) domain. The interval 1322-1458 (HQITAETVRT…ATILFEDPGA (137 aa)) is N-terminal hotdog fold. A PKS/mFAS DH domain is found at 1322–1632 (HQITAETVRT…FRRVPRLLMD (311 aa)). H1354 acts as the Proton acceptor; for dehydratase activity in catalysis. Residues 1390–1628 (HMNLTDVEVL…GMIRFRRVPR (239 aa)) are product template (PT) domain. Residues 1486-1632 (ASRLSKPLAY…FRRVPRLLMD (147 aa)) form a C-terminal hotdog fold region. D1543 (proton donor; for dehydratase activity) is an active-site residue. The segment at 1695-1721 (LLATSSGDSTPKEPPIVTPAESERAGP) is disordered. Residues 1721–1798 (PVDNNMISQC…EMTAWIEEYC (78 aa)) enclose the Carrier domain. S1758 is subject to O-(pantetheine 4'-phosphoryl)serine.

Pantetheine 4'-phosphate serves as cofactor.

Its pathway is secondary metabolite biosynthesis. Its function is as follows. Non-reducing polyketide synthase; part of the gene cluster that mediates the biosynthesis of neosartoricin B, a prenylated anthracenone that probably exhibits T-cell antiproliferative activity, suggestive of a physiological role as an immunosuppressive agent. The non-reducing polyketide synthase nscA probably synthesizes and cyclizes the decaketide backbone. The hydrolase nscB then mediates the product release through hydrolysis followed by spontaneous decarboxylation. The prenyltransferase nscD catalyzes the addition of the dimethylallyl group to the aromatic C5. The FAD-dependent monooxygenase nscC is then responsible for the stereospecific hydroxylation at C2. Neosartoricin B can be converted into two additional compounds neosartoricins C and D. Neosartoricin C is a spirocyclic compound that is cyclized through the attack of C3 hydroxyl on C14, followed by dehydration. On the other hand, neosartoricin D is a further cyclized compound in which attack of C2 on C14 in neosartoricin C results in the formation of the acetal-containing dioxabicyclo-octanone ring. Both of these compounds are novel and possibly represent related metabolites of the gene cluster. This Trichophyton rubrum (strain ATCC MYA-4607 / CBS 118892) (Athlete's foot fungus) protein is Non-reducing polyketide synthase nscA.